The following is a 390-amino-acid chain: Odorant receptor 85b (390 aa).

The Cytoplasmic segment spans residues 1-30; the sequence is MEKLMKYASFFYTAVGIRPYTNGEESKMNK. A helical transmembrane segment spans residues 31-51; sequence LIFHIVFWSNVINLSFVGLFE. Over 52-66 the chain is Extracellular; the sequence is SIYVYSAFMDNKFLE. Residues 67 to 87 traverse the membrane as a helical segment; the sequence is AVTALSYIGFVTVGMSKMFFI. Residues 88 to 126 lie on the Cytoplasmic side of the membrane; that stretch reads RWKKTAITELINELKEIYPNGLIREERYNLPMYLGTCSR. Residues 127-147 form a helical membrane-spanning segment; it reads ISLIYSLLYSVLIWTFNLFCV. The Extracellular segment spans residues 148 to 200; the sequence is MEYWVYDKWLNIRVVGKQLPYLMYIPWKWQDNWSYYPLLFSQNFAGYTSAAGQ. Asparagine 179 carries N-linked (GlcNAc...) asparagine glycosylation. Residues 201-221 traverse the membrane as a helical segment; sequence ISTDVLLCAVATQLVMHFDFL. The Cytoplasmic segment spans residues 222 to 260; the sequence is SNSMERHELSGDWKKDSRFLVDIVRYHERILRLSDAVND. The chain crosses the membrane as a helical span at residues 261–281; it reads IFGIPLLLNFMVSSFVICFVG. The Extracellular segment spans residues 282 to 291; sequence FQMTVGVPPD. The helical transmembrane segment at 292–312 threads the bilayer; that stretch reads IVVKLFLFLVSSMSQVYLICH. At 313–360 the chain is on the cytoplasmic side; the sequence is YGQLVADASYGFSVATYNQKWYKADVRYKRALVIIIARSQKVTFLKAT. The helical transmembrane segment at 361–381 threads the bilayer; the sequence is IFLDITRSTMTDLLQISYKFF. The Extracellular portion of the chain corresponds to 382–390; that stretch reads ALLRTMYTQ.

The protein belongs to the insect chemoreceptor superfamily. Heteromeric odorant receptor channel (TC 1.A.69) family. Or49a subfamily. In terms of assembly, interacts with Orco. Complexes exist early in the endomembrane system in olfactory sensory neurons (OSNs), coupling these complexes to the conserved ciliary trafficking pathway. Expressed in olfactory sensory neurons in the antenna.

It is found in the cell membrane. Functionally, odorant receptor which mediates acceptance or avoidance behavior, depending on its substrates. The odorant receptor repertoire encodes a large collection of odor stimuli that vary widely in identity, intensity, and duration. Forms a complex with Orco to form odorant-sensing units, providing sensitive and prolonged odorant signaling and calcium permeability. Involved in the behavioral responses to 2-heptanone, amyl acetate, and butyl acetate. This chain is Odorant receptor 85b (Or85b), found in Drosophila melanogaster (Fruit fly).